We begin with the raw amino-acid sequence, 673 residues long: Auxin response factor 9 (673 aa).

Residues 126-228 constitute a DNA-binding region (TF-B3); sequence FCKTLTASDT…ELRVGVRRLM (103 aa). 2 disordered regions span residues 356–386 and 514–545; these read ELEP…PSVV and DSDQ…QSRQ. Residues 516 to 545 show a composition bias toward polar residues; the sequence is DQISQPSNGNKSDAPGTSSERSPLESQSRQ. The PB1 domain occupies 547-639; sequence RSCTKVIMQG…EEAKLLAPKS (93 aa).

This sequence belongs to the ARF family. Homodimers and heterodimers. As to expression, expressed in roots, culms, leaves and young panicles.

It localises to the nucleus. Its function is as follows. Auxin response factors (ARFs) are transcriptional factors that bind specifically to the DNA sequence 5'-TGTCTC-3' found in the auxin-responsive promoter elements (AuxREs). The chain is Auxin response factor 9 (ARF9) from Oryza sativa subsp. japonica (Rice).